Consider the following 103-residue polypeptide: Eukaryotic translation initiation factor 4E-1A-binding protein homolog (103 aa).

The interval 49 to 103 is disordered; it reads NSPLSKTPPPQLAHITNTELNKKVEKSTTTPTTTTPPTTTAKPKPTNDDDIFPME. The segment covering 76–92 has biased composition (low complexity); the sequence is TTTPTTTTPPTTTAKPK.

It belongs to the eIF4E-binding protein family.

Its function is as follows. Regulates assembly of the eIF4F complex. In Dictyostelium discoideum (Social amoeba), this protein is Eukaryotic translation initiation factor 4E-1A-binding protein homolog (febA).